The chain runs to 518 residues: Ethanolamine kinase (518 aa).

A compositionally biased stretch (polar residues) spans 1–19 (MGTETKSNSYTGQISTSGG). Residues 1 to 88 (MGTETKSNSY…DIRAKPEDKS (88 aa)) are disordered. Low complexity predominate over residues 33–68 (QTVNQQTLSLSQSNQVQNQLNSHSNSNSYPNPSGSE). Residues 69–88 (NKNENEQNSRDIRAKPEDKS) are compositionally biased toward basic and acidic residues. Phosphoserine is present on residues S190 and S194.

The protein belongs to the choline/ethanolamine kinase family.

It is found in the cytoplasm. The catalysed reaction is ethanolamine + ATP = phosphoethanolamine + ADP + H(+). It participates in phospholipid metabolism; phosphatidylethanolamine biosynthesis; phosphatidylethanolamine from ethanolamine: step 1/3. Highly specific for ethanolamine phosphorylation. May be a rate-controlling step in phosphatidylethanolamine biosynthesis. The sequence is that of Ethanolamine kinase (eas) from Drosophila melanogaster (Fruit fly).